Reading from the N-terminus, the 156-residue chain is SsrA-binding protein (156 aa).

It belongs to the SmpB family.

The protein resides in the cytoplasm. Functionally, required for rescue of stalled ribosomes mediated by trans-translation. Binds to transfer-messenger RNA (tmRNA), required for stable association of tmRNA with ribosomes. tmRNA and SmpB together mimic tRNA shape, replacing the anticodon stem-loop with SmpB. tmRNA is encoded by the ssrA gene; the 2 termini fold to resemble tRNA(Ala) and it encodes a 'tag peptide', a short internal open reading frame. During trans-translation Ala-aminoacylated tmRNA acts like a tRNA, entering the A-site of stalled ribosomes, displacing the stalled mRNA. The ribosome then switches to translate the ORF on the tmRNA; the nascent peptide is terminated with the 'tag peptide' encoded by the tmRNA and targeted for degradation. The ribosome is freed to recommence translation, which seems to be the essential function of trans-translation. The polypeptide is SsrA-binding protein (Bacillus velezensis (strain DSM 23117 / BGSC 10A6 / LMG 26770 / FZB42) (Bacillus amyloliquefaciens subsp. plantarum)).